Reading from the N-terminus, the 113-residue chain is Putative pterin-4-alpha-carbinolamine dehydratase (113 aa).

It belongs to the pterin-4-alpha-carbinolamine dehydratase family.

The catalysed reaction is (4aS,6R)-4a-hydroxy-L-erythro-5,6,7,8-tetrahydrobiopterin = (6R)-L-erythro-6,7-dihydrobiopterin + H2O. In Legionella pneumophila (strain Paris), this protein is Putative pterin-4-alpha-carbinolamine dehydratase.